The chain runs to 243 residues: UPF0758 protein PCC7424_2073 (243 aa).

The MPN domain occupies 112 to 235 (VEINDPVSAV…HQSLRTVTDL (124 aa)). Residues His-184, His-186, and Asp-197 each coordinate Zn(2+). Positions 184-197 (HNHPSGNVAPSQED) match the JAMM motif motif.

It belongs to the UPF0758 family.

The polypeptide is UPF0758 protein PCC7424_2073 (Gloeothece citriformis (strain PCC 7424) (Cyanothece sp. (strain PCC 7424))).